The following is a 137-amino-acid chain: 15.7 kDa heat shock protein, peroxisomal (137 aa).

In terms of domain architecture, sHSP spans 15–134 (QEWSRSTALI…SSKVRNVNIT (120 aa)). The short motif at 135–137 (SKL) is the Microbody targeting signal element.

It belongs to the small heat shock protein (HSP20) family. In terms of assembly, may form oligomeric structures.

The protein localises to the peroxisome. Possesses chaperone activity. The chain is 15.7 kDa heat shock protein, peroxisomal (HSP15.7) from Arabidopsis thaliana (Mouse-ear cress).